We begin with the raw amino-acid sequence, 421 residues long: Large ribosomal subunit protein uL4 (421 aa).

Residue alanine 2 is modified to N-acetylalanine. Lysine 14 carries the post-translational modification N6-acetyllysine. Omega-N-methylarginine is present on arginine 97. Lysine 106 carries the N6-acetyllysine modification. A Glycyl lysine isopeptide (Lys-Gly) (interchain with G-Cter in SUMO2) cross-link involves residue lysine 239. N6-acetyllysine is present on lysine 259. Threonine 266 carries the phosphothreonine modification. A phosphoserine mark is found at serine 290 and serine 295. Arginine 300 carries the post-translational modification Citrulline. Residue lysine 327 forms a Glycyl lysine isopeptide (Lys-Gly) (interchain with G-Cter in SUMO2) linkage. N6-acetyllysine occurs at positions 333 and 353. N6-acetyllysine; alternate is present on lysine 364. Lysine 364 is covalently cross-linked (Glycyl lysine isopeptide (Lys-Gly) (interchain with G-Cter in SUMO1); alternate). Serine 365 bears the Phosphoserine mark. Over residues 365–379 the composition is skewed to basic and acidic residues; the sequence is SEKIVPEKGAGDKKP. The interval 365 to 421 is disordered; it reads SEKIVPEKGAGDKKPAVGKKGKKPVDAKKLKKPAGKKVVTKKPAEKKPTTEEKKSAA. Residues 393-404 show a composition bias toward basic residues; it reads KLKKPAGKKVVT. Basic and acidic residues predominate over residues 406 to 421; it reads KPAEKKPTTEEKKSAA.

This sequence belongs to the universal ribosomal protein uL4 family. As to quaternary structure, component of the large ribosomal subunit. May bind IPO9 with low affinity. Interacts with RBM3. In terms of processing, citrullinated by PADI4.

It localises to the cytoplasm. In terms of biological role, component of the large ribosomal subunit. The ribosome is a large ribonucleoprotein complex responsible for the synthesis of proteins in the cell. The chain is Large ribosomal subunit protein uL4 (Rpl4) from Rattus norvegicus (Rat).